A 617-amino-acid chain; its full sequence is COMPASS component cclA (617 aa).

Low complexity-rich tracts occupy residues Met1–Pro19 and Ser40–Ala50. The interval Met1–Asn89 is disordered. Over residues Ser57 to Glu69 the composition is skewed to basic residues. The B30.2/SPRY domain maps to Ile157–Thr380. The disordered stretch occupies residues Thr595–Ser617.

Belongs to the cclA family. In terms of assembly, component of the COMPASS complex.

The protein resides in the nucleus. Its subcellular location is the chromosome. The protein localises to the telomere. Its function is as follows. Component of the COMPASS (Set1C) complex that specifically mono-, di- and trimethylates histone H3 to form H3K4me1/2/3, which subsequently plays a role in telomere length maintenance and transcription elongation regulation. Controls the production of several secondary metabolites, including astellolides. The sequence is that of COMPASS component cclA from Aspergillus oryzae (strain ATCC 42149 / RIB 40) (Yellow koji mold).